We begin with the raw amino-acid sequence, 321 residues long: 2,3,4,5-tetrahydropyridine-2,6-dicarboxylate N-succinyltransferase (321 aa).

Mg(2+) contacts are provided by aspartate 166 and glutamate 183. The active-site Acyl-anhydride intermediate is glutamate 199. Succinyl-CoA-binding positions include arginine 201, glycine 216, serine 219, alanine 242, 257–258 (EA), glycine 265, lysine 281, and 294–297 (RRNS).

It belongs to the type 2 tetrahydrodipicolinate N-succinyltransferase family. As to quaternary structure, homotrimer.

It localises to the cytoplasm. It carries out the reaction (S)-2,3,4,5-tetrahydrodipicolinate + succinyl-CoA + H2O = (S)-2-succinylamino-6-oxoheptanedioate + CoA. It functions in the pathway amino-acid biosynthesis; L-lysine biosynthesis via DAP pathway; LL-2,6-diaminopimelate from (S)-tetrahydrodipicolinate (succinylase route): step 1/3. Catalyzes the conversion of the cyclic tetrahydrodipicolinate (THDP) into the acyclic N-succinyl-L-2-amino-6-oxopimelate using succinyl-CoA. This chain is 2,3,4,5-tetrahydropyridine-2,6-dicarboxylate N-succinyltransferase, found in Rothia mucilaginosa (strain DY-18) (Stomatococcus mucilaginosus).